The primary structure comprises 90 residues: uncharacterized protein (90 aa).

The protein resides in the cytoplasm. This is an uncharacterized protein from Saccharomyces cerevisiae (strain ATCC 204508 / S288c) (Baker's yeast).